The primary structure comprises 335 residues: NADH-ubiquinone oxidoreductase chain 2 (335 aa).

A run of 11 helical transmembrane segments spans residues 7–27 (PTMALAMSTLIMSTLMAVSSA), 28–48 (NWMFLWGAMELNLLSFIPIMM), 58–78 (GAVKYFLAQALGSALLLMSST), 81–101 (WMTFSMISNFMPLTLMAAIML), 110–130 (FWYPSVMASISWVSCLILSSW), 147–167 (NMNFMLSMAAMNALLGGVIGM), 174–194 (TIMAYSSIGHIGWMMSLAAVY), 200–220 (IMYFVVYCILITPLFMTMGYL), 240–260 (MALLMVLLSLGGLPPFTGFMP), 274–294 (IILLILIAGSIMNLFFYLNII), and 315–335 (SLKFVIPICTLSLGLSPFIML).

This sequence belongs to the complex I subunit 2 family.

It localises to the mitochondrion inner membrane. The catalysed reaction is a ubiquinone + NADH + 5 H(+)(in) = a ubiquinol + NAD(+) + 4 H(+)(out). In terms of biological role, core subunit of the mitochondrial membrane respiratory chain NADH dehydrogenase (Complex I) that is believed to belong to the minimal assembly required for catalysis. Complex I functions in the transfer of electrons from NADH to the respiratory chain. The immediate electron acceptor for the enzyme is believed to be ubiquinone. The chain is NADH-ubiquinone oxidoreductase chain 2 (ND2) from Lumbricus terrestris (Common earthworm).